The primary structure comprises 215 residues: Histidine biosynthesis bifunctional protein HisIE (215 aa).

A phosphoribosyl-AMP cyclohydrolase region spans residues 1–114 (MLKKHDLLNL…FISNKYNINF (114 aa)). Positions 115–215 (LFKLEEIIEE…LNTNSEKLLK (101 aa)) are phosphoribosyl-ATP pyrophosphohydrolase.

It in the N-terminal section; belongs to the PRA-CH family. In the C-terminal section; belongs to the PRA-PH family.

It is found in the cytoplasm. The catalysed reaction is 1-(5-phospho-beta-D-ribosyl)-ATP + H2O = 1-(5-phospho-beta-D-ribosyl)-5'-AMP + diphosphate + H(+). The enzyme catalyses 1-(5-phospho-beta-D-ribosyl)-5'-AMP + H2O = 1-(5-phospho-beta-D-ribosyl)-5-[(5-phospho-beta-D-ribosylamino)methylideneamino]imidazole-4-carboxamide. It functions in the pathway amino-acid biosynthesis; L-histidine biosynthesis; L-histidine from 5-phospho-alpha-D-ribose 1-diphosphate: step 2/9. It participates in amino-acid biosynthesis; L-histidine biosynthesis; L-histidine from 5-phospho-alpha-D-ribose 1-diphosphate: step 3/9. The sequence is that of Histidine biosynthesis bifunctional protein HisIE (hisI) from Buchnera aphidicola subsp. Acyrthosiphon pisum (strain APS) (Acyrthosiphon pisum symbiotic bacterium).